A 146-amino-acid chain; its full sequence is Large ribosomal subunit protein uL24 (146 aa).

Residues 1–33 are disordered; the sequence is MKYNPRVTSSRRRNRKPHFTASSSERRVXMSSP. Over residues 9–18 the composition is skewed to basic residues; it reads SSRRRNRKPH.

The protein belongs to the universal ribosomal protein uL24 family.

The chain is Large ribosomal subunit protein uL24 (RPL26) from Brassica campestris (Field mustard).